Here is a 113-residue protein sequence, read N- to C-terminus: uncharacterized protein (113 aa).

It to H.influenzae HI_1053 and P.denitrificans COX locus Uncharacterized protein 4.

This is an uncharacterized protein from Cupriavidus necator (strain ATCC 17699 / DSM 428 / KCTC 22496 / NCIMB 10442 / H16 / Stanier 337) (Ralstonia eutropha).